A 617-amino-acid polypeptide reads, in one-letter code: Vacuolar protein sorting-associated protein 33A (617 aa).

A disordered region spans residues 268–287; that stretch reads NFPSDGALPGGGGSGPRVEE.

The protein belongs to the STXBP/unc-18/SEC1 family. As to quaternary structure, component of the class C core vacuole/endosome tethering (CORVET) complex composed of at least Vps8, dor/Vps18, car/Vps33A and Vps16A; unlike in other species, Vps11 is not part of the Drosophila complex. Due to the reduced number of components the Drosophila CORVET complex is often referred to as the miniCORVET complex. Interacts with ema. Component of the homotypic fusion and vacuole protein sorting (HOPS) complex, composed of Vps16A, car/Vps33A, dor/Vps18, Vps39, Vps11 and lt/Vps41. The tethering complex core made up of Vps16A, car/Vps33A and dor/Vps18 and shared by both HOPS and CORVET, preferentially associates with CORVET specific Vps8 over HOPS specific lt/Vps41. Interacts with Syx17 (via SNARE domain); the interaction requires Vps16A, may involve additional components of the HOPS complex and may promote assembly of the Syx17-Snap29-Vamp7 trans-SNARE complex.

The protein resides in the early endosome. The protein localises to the late endosome membrane. Its subcellular location is the lysosome membrane. Functionally, core component of the class C core vacuole/endosome tethering (CORVET) and the homotypic fusion and vacuole protein sorting (HOPS) tethering complexes involved in endo-lysosomal vesicle trafficking and lysosome biogenesis. The CORVET complex facilitates docking and fusion of endosomal vesicles during endosome maturation, acts upstream of HOPS, but is not involved in autophagic flux. The CORVET complex may cooperate with the early endosomal tether Rbsn-5 to mediate endosomal fusion. The HOPS complex facilitates docking and fusion of lysosomes with late endosomes and several other types of vesicles. The HOPS complex is also involved in autophagy and crinophagy (the elimination of unused secretory granules through their fusion with lysosomes). The HOPS complex probably instigates autophagosome-lysosome fusion by binding autophagosome associated Syx17/syntaxin 17 and promoting assembly of the trans-SNARE complex. Independent of Syx17/syntaxin 17 HOPS is involved in biosynthetic transport to lysosomes and lysosome-related organelles such as eye-pigment granules. Required for endocytic degradation of boss/bride of sevenless and N/Notch in developing ommatidia. The protein is Vacuolar protein sorting-associated protein 33A of Drosophila melanogaster (Fruit fly).